The primary structure comprises 495 residues: Acyltransferase abl6 (495 aa).

The active-site Proton acceptor is His171.

Belongs to the plant acyltransferase family.

In terms of biological role, acyltransferase; part of the gene cluster that mediates the biosynthesis of abscisic acid (ABA), a phytohormone that acts antagonistically toward salicylic acid (SA), jasmonic acid (JA) and ethylene (ETH) signaling, to impede plant defense responses. The first step of the pathway catalyzes the reaction from farnesyl diphosphate to alpha-ionylideneethane performed by the alpha-ionylideneethane synthase abl3 via a three-step reaction mechanism involving 2 neutral intermediates, beta-farnesene and allofarnesene. The cytochrome P450 monooxygenase abl1 might then be involved in the conversion of alpha-ionylideneethane to alpha-ionylideneacetic acid. Alpha-ionylideneacetic acid is further converted to abscisic acid in 2 steps involving the cytochrome P450 monooxygenase abl2 and the short-chain dehydrogenase/reductase abl4, via the intermediates 1'-deoxy-ABA or 1',4'-trans-diol-ABA, depending on the order of action of these 2 enzymes. Abl2 is responsible for the hydroxylation of carbon atom C-1' and abl4 might be involved in the oxidation of the C-4' carbon atom. The acyltransferase abl6 seems not essential for the biosynthesis of ABA, but it may acetylate ABA as part of the synthesis of another ABA-related molecule. The chain is Acyltransferase abl6 from Leptosphaeria maculans (strain JN3 / isolate v23.1.3 / race Av1-4-5-6-7-8) (Blackleg fungus).